The sequence spans 322 residues: GTP 3',8-cyclase (322 aa).

Positions 4–229 (NFNRNIDYLR…IPVQMKKSGP (226 aa)) constitute a Radical SAM core domain. Residue Arg-13 participates in GTP binding. 2 residues coordinate [4Fe-4S] cluster: Cys-20 and Cys-24. Residue Tyr-26 coordinates S-adenosyl-L-methionine. A [4Fe-4S] cluster-binding site is contributed by Cys-27. Residue Arg-64 participates in GTP binding. Position 68 (Gly-68) interacts with S-adenosyl-L-methionine. Thr-95 lines the GTP pocket. Ser-119 contacts S-adenosyl-L-methionine. Lys-156 contributes to the GTP binding site. Residue Met-190 coordinates S-adenosyl-L-methionine. Residues Cys-253 and Cys-256 each coordinate [4Fe-4S] cluster. 258-260 (RLR) is a binding site for GTP. Cys-270 provides a ligand contact to [4Fe-4S] cluster.

The protein belongs to the radical SAM superfamily. MoaA family. As to quaternary structure, monomer and homodimer. Requires [4Fe-4S] cluster as cofactor.

It catalyses the reaction GTP + AH2 + S-adenosyl-L-methionine = (8S)-3',8-cyclo-7,8-dihydroguanosine 5'-triphosphate + 5'-deoxyadenosine + L-methionine + A + H(+). It functions in the pathway cofactor biosynthesis; molybdopterin biosynthesis. Functionally, catalyzes the cyclization of GTP to (8S)-3',8-cyclo-7,8-dihydroguanosine 5'-triphosphate. This chain is GTP 3',8-cyclase, found in Thermodesulfovibrio yellowstonii (strain ATCC 51303 / DSM 11347 / YP87).